Consider the following 73-residue polypeptide: Large ribosomal subunit protein bL31 (73 aa).

This sequence belongs to the bacterial ribosomal protein bL31 family. Type A subfamily. Part of the 50S ribosomal subunit.

Functionally, binds the 23S rRNA. This chain is Large ribosomal subunit protein bL31 (rpmE), found in Roseobacter denitrificans (strain ATCC 33942 / OCh 114) (Erythrobacter sp. (strain OCh 114)).